Here is a 209-residue protein sequence, read N- to C-terminus: Holliday junction branch migration complex subunit RuvA (209 aa).

A domain I region spans residues 1–70; sequence MINYLKGKTT…EDQQILYGFS (70 aa). A domain II region spans residues 71 to 149; sequence TDSERDLFRQ…QWEQAIALKT (79 aa). The interval 150-160 is flexible linker; it reads PVSVGVPSREI. A domain III region spans residues 160–209; the sequence is ILEEVEMTLLALGYTDEEIDQAISAISQDNLLLKNPHVEEWLKSAIAWLS.

This sequence belongs to the RuvA family. As to quaternary structure, homotetramer. Forms an RuvA(8)-RuvB(12)-Holliday junction (HJ) complex. HJ DNA is sandwiched between 2 RuvA tetramers; dsDNA enters through RuvA and exits via RuvB. An RuvB hexamer assembles on each DNA strand where it exits the tetramer. Each RuvB hexamer is contacted by two RuvA subunits (via domain III) on 2 adjacent RuvB subunits; this complex drives branch migration. In the full resolvosome a probable DNA-RuvA(4)-RuvB(12)-RuvC(2) complex forms which resolves the HJ.

The protein localises to the cytoplasm. Its function is as follows. The RuvA-RuvB-RuvC complex processes Holliday junction (HJ) DNA during genetic recombination and DNA repair, while the RuvA-RuvB complex plays an important role in the rescue of blocked DNA replication forks via replication fork reversal (RFR). RuvA specifically binds to HJ cruciform DNA, conferring on it an open structure. The RuvB hexamer acts as an ATP-dependent pump, pulling dsDNA into and through the RuvAB complex. HJ branch migration allows RuvC to scan DNA until it finds its consensus sequence, where it cleaves and resolves the cruciform DNA. The polypeptide is Holliday junction branch migration complex subunit RuvA (Gloeothece citriformis (strain PCC 7424) (Cyanothece sp. (strain PCC 7424))).